A 373-amino-acid polypeptide reads, in one-letter code: Chaperone protein DnaJ (373 aa).

The J domain occupies 4 to 69; sequence SYYEILEITQ…EKRAIYDRYG (66 aa). The CR-type zinc finger occupies 135–212; the sequence is GCKKNIDFTY…CKGLGYNESK (78 aa). Residues C148, C151, C164, C167, C186, C189, C200, and C203 each coordinate Zn(2+). CXXCXGXG motif repeat units lie at residues 148–155, 164–171, 186–193, and 200–207; these read CKTCNGTG, CPKCQGRG, CPDCQGIG, and CSDCKGLG.

This sequence belongs to the DnaJ family. Homodimer. The cofactor is Zn(2+).

The protein resides in the cytoplasm. In terms of biological role, participates actively in the response to hyperosmotic and heat shock by preventing the aggregation of stress-denatured proteins and by disaggregating proteins, also in an autonomous, DnaK-independent fashion. Unfolded proteins bind initially to DnaJ; upon interaction with the DnaJ-bound protein, DnaK hydrolyzes its bound ATP, resulting in the formation of a stable complex. GrpE releases ADP from DnaK; ATP binding to DnaK triggers the release of the substrate protein, thus completing the reaction cycle. Several rounds of ATP-dependent interactions between DnaJ, DnaK and GrpE are required for fully efficient folding. Also involved, together with DnaK and GrpE, in the DNA replication of plasmids through activation of initiation proteins. This is Chaperone protein DnaJ from Campylobacter jejuni subsp. jejuni serotype O:2 (strain ATCC 700819 / NCTC 11168).